Reading from the N-terminus, the 643-residue chain is Fructose-1,6-bisphosphatase class 3 (643 aa).

This sequence belongs to the FBPase class 3 family. Mn(2+) serves as cofactor.

The catalysed reaction is beta-D-fructose 1,6-bisphosphate + H2O = beta-D-fructose 6-phosphate + phosphate. It participates in carbohydrate biosynthesis; gluconeogenesis. The chain is Fructose-1,6-bisphosphatase class 3 from Streptococcus agalactiae serotype Ia (strain ATCC 27591 / A909 / CDC SS700).